We begin with the raw amino-acid sequence, 761 residues long: Xaa-Pro dipeptidyl-peptidase (761 aa).

Active-site charge relay system residues include serine 347, aspartate 467, and histidine 497.

It belongs to the peptidase S15 family. Homodimer.

The protein localises to the cytoplasm. The catalysed reaction is Hydrolyzes Xaa-Pro-|- bonds to release unblocked, N-terminal dipeptides from substrates including Ala-Pro-|-p-nitroanilide and (sequentially) Tyr-Pro-|-Phe-Pro-|-Gly-Pro-|-Ile.. In terms of biological role, removes N-terminal dipeptides sequentially from polypeptides having unsubstituted N-termini provided that the penultimate residue is proline. In Streptococcus agalactiae serotype V (strain ATCC BAA-611 / 2603 V/R), this protein is Xaa-Pro dipeptidyl-peptidase.